The following is a 117-amino-acid chain: DNA-directed RNA polymerase subunit omega (117 aa).

Belongs to the RNA polymerase subunit omega family. In terms of assembly, the RNAP catalytic core consists of 2 alpha, 1 beta, 1 beta' and 1 omega subunit. When a sigma factor is associated with the core the holoenzyme is formed, which can initiate transcription.

It carries out the reaction RNA(n) + a ribonucleoside 5'-triphosphate = RNA(n+1) + diphosphate. Its function is as follows. Promotes RNA polymerase assembly. Latches the N- and C-terminal regions of the beta' subunit thereby facilitating its interaction with the beta and alpha subunits. The sequence is that of DNA-directed RNA polymerase subunit omega from Cereibacter sphaeroides (strain ATCC 17029 / ATH 2.4.9) (Rhodobacter sphaeroides).